We begin with the raw amino-acid sequence, 215 residues long: MLQVYLVRHGETQWNAERRIQGQSDSPLTAHGERQAWQVGERARTLGITHIITSDLGRTRRTAEIIAEACGCSVIADARLRELDMGVLEKRHIDSLSEEEEGWRRQLVNGTPDGRIPQGESMQELSERMHAALASCLELPAGSRPLLVSHGIALGCLVSTILGLPAYAERRLRLRNCSISRVDYQQSPWLASGWVVETAGDVSHLDAPAMDELQR.

Residues 8–15 (RHGETQWN), 21–22 (QG), Arg-58, Arg-60, 82–85 (ELDM), 104–105 (RR), and 151–152 (GI) contribute to the substrate site. His-9 (tele-phosphohistidine intermediate) is an active-site residue. Glu-82 serves as the catalytic Proton donor/acceptor.

The protein belongs to the phosphoglycerate mutase family. GpmB subfamily.

It carries out the reaction (2R)-2-phosphoglycerate = (2R)-3-phosphoglycerate. Its pathway is carbohydrate degradation; glycolysis; pyruvate from D-glyceraldehyde 3-phosphate: step 3/5. The chain is Probable phosphoglycerate mutase GpmB from Klebsiella pneumoniae subsp. pneumoniae (strain ATCC 700721 / MGH 78578).